A 246-amino-acid polypeptide reads, in one-letter code: MTLIEGVGDEVTVLFSVLACLLVLALAWVSTHTAEGGDPLPQPSGTPTPSQPSAAMAATDSMRGEAPGAETPSLRHRGQAAQPEPSTGFTATPPAPDSPQEPLVLRLKFLNDSEQVARAWPHDTIGSLKRTQFPGREQQVRLIYQGQLLGDDTQTLGSLHLPPNCVLHCHVSTRVGPPNPPCPPGSEPGPSGLEIGSLLLPLLLLLLLLLWYCQIQYRPFFPLTATLGLAGFTLLLSLLAFAMYRP.

Positions Thr2–Ser30 are required to release iHOPS from membranes. The helical transmembrane segment at Val11–Thr31 threads the bilayer. The disordered stretch occupies residues Ala34–Glu101. A compositionally biased stretch (pro residues) spans Leu40–Ser50. Thr71 is subject to Phosphothreonine. Ser73 is modified (phosphoserine). Thr92 bears the Phosphothreonine mark. A phosphoserine mark is found at Ser98 and Ser127. The region spanning Leu103 to Gly176 is the Ubiquitin-like domain. 2 helical membrane-spanning segments follow: residues Ile195–Ile215 and Phe221–Phe241.

As to quaternary structure, interacts with EEF1A1, GRIA2, GRIP1, CAMLG, TUBG1. Interacts with NPM1 and CDKN2A; TMUB1 can enhance interaction between NPM1 and CDKN2A and is proposed to bridge the proteins; proposed to be mediated by iHOPS. Interacts with ERLIN2 and AMFR; TMUB1 promotes the interaction of ERLIN2 with AMFR. Post-translationally, processed by regulated intramembrane proteolysis (RIP)in the N-terminus to release iHOPS from membranes. As to expression, ubiquitously expressed with highest levels in mammary and thyroid glands, bone marrow and spleen; limited expression in cardiac, pancreatic and ovarian tissues.

The protein localises to the membrane. The protein resides in the postsynaptic cell membrane. It is found in the recycling endosome. It localises to the cytoplasm. Its subcellular location is the nucleus. The protein localises to the nucleolus. The protein resides in the cytoskeleton. It is found in the microtubule organizing center. It localises to the centrosome. Functionally, involved in sterol-regulated ubiquitination and degradation of HMG-CoA reductase HMGCR. Involved in positive regulation of AMPA-selective glutamate receptor GRIA2 recycling to the cell surface. Acts as a negative regulator of hepatocyte growth during regeneration. In terms of biological role, may contribute to the regulation of translation during cell-cycle progression. May contribute to the regulation of cell proliferation. May be involved in centrosome assembly. Modulates stabilization and nucleolar localization of tumor suppressor CDKN2A and enhances association between CDKN2A and NPM1. The chain is Transmembrane and ubiquitin-like domain-containing protein 1 (TMUB1) from Homo sapiens (Human).